A 387-amino-acid polypeptide reads, in one-letter code: MSAEAPVLGILCGGGPAPGLNGVIAGATLYALRLGWKVIGFMEGFKYLCTGDVDVVKAHTIDLTYDIVSRIHFQGGTIIQTSRANPRKSTELQENVRKCLRALKVRYFLTIGGDDTASSAVSVAQGMDGNEISVISCPKTIDNDLPLPSDQSTFGFHTARSLGMEIIRNLMVDSKSAPRWFLVEAMGRSAGHLALGMAEASGAHLCLIPEEFKQDEIEFEDVVELVEATILKRLAYGKNYGVCVLAEGLVSKMSKKALYRLFGNREPPTDPHGHILLDDAELARSLSEELLKRLGNLGIRITPKKIGYELRCADPVAFDAVYTRELGYGAIDAFLNGHSAALIVRENGQVKPVQFKDLLDPATGRVRTRLVDVTSQSFKVARVYMWR.

Residue glycine 15 participates in diphosphate binding. Aspartate 114 is a Mg(2+) binding site. Residues threonine 140 to aspartate 142, methionine 186 to arginine 188, glutamate 247, and tyrosine 308 to arginine 311 each bind substrate. Aspartate 142 functions as the Proton acceptor in the catalytic mechanism.

Belongs to the phosphofructokinase type A (PFKA) family. PPi-dependent PFK group II subfamily. Clade 'Short' sub-subfamily. In terms of assembly, homotetramer. Requires Mg(2+) as cofactor.

Its subcellular location is the cytoplasm. It catalyses the reaction beta-D-fructose 6-phosphate + diphosphate = beta-D-fructose 1,6-bisphosphate + phosphate + H(+). It participates in carbohydrate degradation; glycolysis; D-glyceraldehyde 3-phosphate and glycerone phosphate from D-glucose: step 3/4. Its activity is regulated as follows. Non-allosteric. Functionally, catalyzes the phosphorylation of D-fructose 6-phosphate, the first committing step of glycolysis. Uses inorganic phosphate (PPi) as phosphoryl donor instead of ATP like common ATP-dependent phosphofructokinases (ATP-PFKs), which renders the reaction reversible, and can thus function both in glycolysis and gluconeogenesis. Consistently, PPi-PFK can replace the enzymes of both the forward (ATP-PFK) and reverse (fructose-bisphosphatase (FBPase)) reactions. This Trichomonas vaginalis (strain ATCC PRA-98 / G3) protein is Pyrophosphate--fructose 6-phosphate 1-phosphotransferase 3 (pfk3).